The sequence spans 276 residues: RAB7A-interacting MON1-CCZ1 complex subunit 1 (276 aa).

Belongs to the RIMOC1 family.

Its subcellular location is the cytoplasm. The protein localises to the cytosol. Its function is as follows. Plays an important role in the removal of damaged mitochondria via mitophagy by controlling the stability and localization of RAB7A. Required for the recruitment of RAB7A and ATG9A vesicles to damaged mitochondria and promotes the stability of RAB7A by inhibiting its proteasomal degradation during mitophagy. In Danio rerio (Zebrafish), this protein is RAB7A-interacting MON1-CCZ1 complex subunit 1 (rimoc1).